Here is a 182-residue protein sequence, read N- to C-terminus: Regulatory protein RecX (182 aa).

Positions 12 to 54 (LSQRDHSESELRRKLAAPPFSAKGNWGKRSGAKSSNLVESNPV) are disordered. Over residues 13–24 (SQRDHSESELRR) the composition is skewed to basic and acidic residues. The span at 43-54 (AKSSNLVESNPV) shows a compositional bias: polar residues.

This sequence belongs to the RecX family.

It is found in the cytoplasm. Modulates RecA activity. The protein is Regulatory protein RecX of Yersinia pseudotuberculosis serotype I (strain IP32953).